The sequence spans 406 residues: Cysteine desulfurase (406 aa).

K226 is subject to N6-(pyridoxal phosphate)lysine. The Cysteine persulfide intermediate role is filled by C364.

It belongs to the class-V pyridoxal-phosphate-dependent aminotransferase family. Csd subfamily. As to quaternary structure, homodimer. Interacts with SufE and the SufBCD complex composed of SufB, SufC and SufD. The interaction with SufE is required to mediate the direct transfer of the sulfur atom from the S-sulfanylcysteine. The cofactor is pyridoxal 5'-phosphate.

The protein localises to the cytoplasm. It carries out the reaction (sulfur carrier)-H + L-cysteine = (sulfur carrier)-SH + L-alanine. It catalyses the reaction L-selenocysteine + AH2 = hydrogenselenide + L-alanine + A + H(+). The protein operates within cofactor biosynthesis; iron-sulfur cluster biosynthesis. Functionally, cysteine desulfurases mobilize the sulfur from L-cysteine to yield L-alanine, an essential step in sulfur metabolism for biosynthesis of a variety of sulfur-containing biomolecules. Component of the suf operon, which is activated and required under specific conditions such as oxidative stress and iron limitation. Acts as a potent selenocysteine lyase in vitro, that mobilizes selenium from L-selenocysteine. Selenocysteine lyase activity is however unsure in vivo. The protein is Cysteine desulfurase of Escherichia coli O139:H28 (strain E24377A / ETEC).